The primary structure comprises 159 residues: AQEEEAEQNLSELSGPWRTVYIGSTNPEKIQENGPFRTYFRELVFDDEKGTVDFYFSVKRDGKWKNVHVKATKQDDGTYVADYEGQNVFKIVSLSRTHLVAHNINVDKHGQTTELTELFVKLNVEDEDLEKFWKLTEDKGIDKKNVVNFLENEDHPHPE.

The protein belongs to the calycin superfamily. Lipocalin family. As to quaternary structure, homodimer.

It localises to the secreted. Its function is as follows. This protein binds a wide variety of chemical odorants. The protein is Odorant-binding protein of Bos taurus (Bovine).